A 211-amino-acid chain; its full sequence is Cytochrome c biogenesis ATP-binding export protein CcmA (211 aa).

An ABC transporter domain is found at 1-211; that stretch reads MAIHNLACVR…RMAEATSCFG (211 aa). 33–40 contributes to the ATP binding site; the sequence is GSNGAGKT.

It belongs to the ABC transporter superfamily. CcmA exporter (TC 3.A.1.107) family. The complex is composed of two ATP-binding proteins (CcmA) and two transmembrane proteins (CcmB).

The protein resides in the cell inner membrane. It catalyses the reaction heme b(in) + ATP + H2O = heme b(out) + ADP + phosphate + H(+). Part of the ABC transporter complex CcmAB involved in the biogenesis of c-type cytochromes; once thought to export heme, this seems not to be the case, but its exact role is uncertain. Responsible for energy coupling to the transport system. This Sodalis glossinidius (strain morsitans) protein is Cytochrome c biogenesis ATP-binding export protein CcmA.